A 385-amino-acid chain; its full sequence is 8-amino-7-oxononanoate synthase (385 aa).

Arg-23 contacts substrate. 110 to 111 contributes to the pyridoxal 5'-phosphate binding site; sequence GF. Residue His-135 participates in substrate binding. Ser-180, His-208, and Thr-234 together coordinate pyridoxal 5'-phosphate. The residue at position 237 (Lys-237) is an N6-(pyridoxal phosphate)lysine. Thr-350 serves as a coordination point for substrate.

Belongs to the class-II pyridoxal-phosphate-dependent aminotransferase family. BioF subfamily. In terms of assembly, homodimer. It depends on pyridoxal 5'-phosphate as a cofactor.

It catalyses the reaction 6-carboxyhexanoyl-[ACP] + L-alanine + H(+) = (8S)-8-amino-7-oxononanoate + holo-[ACP] + CO2. It functions in the pathway cofactor biosynthesis; biotin biosynthesis. Catalyzes the decarboxylative condensation of pimeloyl-[acyl-carrier protein] and L-alanine to produce 8-amino-7-oxononanoate (AON), [acyl-carrier protein], and carbon dioxide. In Vibrio vulnificus (strain YJ016), this protein is 8-amino-7-oxononanoate synthase.